A 424-amino-acid polypeptide reads, in one-letter code: Enolase (424 aa).

Gln165 provides a ligand contact to (2R)-2-phosphoglycerate. Catalysis depends on Glu207, which acts as the Proton donor. 3 residues coordinate Mg(2+): Asp244, Glu283, and Asp310. (2R)-2-phosphoglycerate contacts are provided by Lys335, Arg364, Ser365, and Lys386. The Proton acceptor role is filled by Lys335.

This sequence belongs to the enolase family. Mg(2+) serves as cofactor.

It localises to the cytoplasm. The protein localises to the secreted. It is found in the cell surface. It catalyses the reaction (2R)-2-phosphoglycerate = phosphoenolpyruvate + H2O. It participates in carbohydrate degradation; glycolysis; pyruvate from D-glyceraldehyde 3-phosphate: step 4/5. In terms of biological role, catalyzes the reversible conversion of 2-phosphoglycerate (2-PG) into phosphoenolpyruvate (PEP). It is essential for the degradation of carbohydrates via glycolysis. The polypeptide is Enolase (Chlamydia trachomatis serovar L2 (strain ATCC VR-902B / DSM 19102 / 434/Bu)).